We begin with the raw amino-acid sequence, 148 residues long: Deoxyuridine 5'-triphosphate nucleotidohydrolase (148 aa).

Substrate-binding positions include 67-69 (RSG), N80, 84-86 (LID), and M94.

Belongs to the dUTPase family. The cofactor is Mg(2+).

The enzyme catalyses dUTP + H2O = dUMP + diphosphate + H(+). It participates in pyrimidine metabolism; dUMP biosynthesis; dUMP from dCTP (dUTP route): step 2/2. Functionally, this enzyme is involved in nucleotide metabolism: it produces dUMP, the immediate precursor of thymidine nucleotides and it decreases the intracellular concentration of dUTP so that uracil cannot be incorporated into DNA. The polypeptide is Deoxyuridine 5'-triphosphate nucleotidohydrolase (Burkholderia cenocepacia (strain ATCC BAA-245 / DSM 16553 / LMG 16656 / NCTC 13227 / J2315 / CF5610) (Burkholderia cepacia (strain J2315))).